Consider the following 198-residue polypeptide: Peptidyl-tRNA hydrolase (198 aa).

Tyrosine 17 serves as a coordination point for tRNA. Residue histidine 22 is the Proton acceptor of the active site. TRNA contacts are provided by tyrosine 74, asparagine 76, and asparagine 122.

This sequence belongs to the PTH family. In terms of assembly, monomer.

It localises to the cytoplasm. It catalyses the reaction an N-acyl-L-alpha-aminoacyl-tRNA + H2O = an N-acyl-L-amino acid + a tRNA + H(+). Hydrolyzes ribosome-free peptidyl-tRNAs (with 1 or more amino acids incorporated), which drop off the ribosome during protein synthesis, or as a result of ribosome stalling. Its function is as follows. Catalyzes the release of premature peptidyl moieties from peptidyl-tRNA molecules trapped in stalled 50S ribosomal subunits, and thus maintains levels of free tRNAs and 50S ribosomes. The protein is Peptidyl-tRNA hydrolase of Kineococcus radiotolerans (strain ATCC BAA-149 / DSM 14245 / SRS30216).